Consider the following 384-residue polypeptide: Deoxyguanosinetriphosphate triphosphohydrolase-like protein (384 aa).

Residues 62 to 198 (RLTHSLEVST…AALADDISYI (137 aa)) enclose the HD domain.

Belongs to the dGTPase family. Type 2 subfamily.

The polypeptide is Deoxyguanosinetriphosphate triphosphohydrolase-like protein (Rickettsia rickettsii (strain Iowa)).